Consider the following 533-residue polypeptide: Hydroxylamine reductase (533 aa).

[4Fe-4S] cluster-binding residues include cysteine 3, cysteine 6, cysteine 15, and cysteine 21. Residues histidine 234, glutamate 258, cysteine 302, cysteine 389, cysteine 417, cysteine 442, glutamate 476, and lysine 478 each coordinate hybrid [4Fe-2O-2S] cluster. Cysteine persulfide is present on cysteine 389.

The protein belongs to the HCP family. The cofactor is [4Fe-4S] cluster. It depends on hybrid [4Fe-2O-2S] cluster as a cofactor.

The protein localises to the cytoplasm. It carries out the reaction A + NH4(+) + H2O = hydroxylamine + AH2 + H(+). Catalyzes the reduction of hydroxylamine to form NH(3) and H(2)O. The polypeptide is Hydroxylamine reductase (Maridesulfovibrio salexigens (strain ATCC 14822 / DSM 2638 / NCIMB 8403 / VKM B-1763) (Desulfovibrio salexigens)).